The sequence spans 394 residues: Serine palmitoyltransferase (394 aa).

Pyridoxal 5'-phosphate contacts are provided by residues G111 to F112, S183, H211, and T239. N6-(pyridoxal phosphate)lysine is present on K242.

Belongs to the class-II pyridoxal-phosphate-dependent aminotransferase family. Requires pyridoxal 5'-phosphate as cofactor.

The catalysed reaction is L-serine + hexadecanoyl-CoA + H(+) = 3-oxosphinganine + CO2 + CoA. Its pathway is lipid metabolism; sphingolipid metabolism. Functionally, involved in de novo bacterial ceramide synthesis. Catalyzes the condensation of L-serine with palmitoyl-CoA (hexadecanoyl-CoA) to produce 3-oxosphinganine. Also capable of using alanine as substrate leading to the formation of 1-deoxysphinganine (1-deoxySa). Contributes to the levels of endogenous sphingolipids in its host. The sequence is that of Serine palmitoyltransferase from Bacteroides thetaiotaomicron (strain ATCC 29148 / DSM 2079 / JCM 5827 / CCUG 10774 / NCTC 10582 / VPI-5482 / E50).